We begin with the raw amino-acid sequence, 320 residues long: MSSMPNHQKVVLVGDGAVGSSYAFAMAQQGIAEEFVIVDVVKDRTKGDALDLEDAQAFTAPKKIYSGEYSDCKDADLVVITAGAPQKPGESRLDLVNKNLNILSSIVKPVVDSGFDGIFLVAANPVDILTYATWKFSGFPKERVIGSGTSLDSSRLRVALGKQFNVDPRSVDAYIMGEHGDSEFAAYSTATIGTRPVRDVAKEQGVSDDDLAKLEDGVRNKAYDIINLKGATFYGIGTALMRISKAILRDENAVLPVGAYMDGQYGLNDIYIGTPAIIGGTGLKQIIESPLSADELKKMQDSAATLKKVLNDGLAELENK.

NAD(+) contacts are provided by residues V18, D39, R44, Y69, and 83–84 (GA). Residues Q86 and R92 each coordinate substrate. Residues S105, 122-124 (AAN), and S147 contribute to the NAD(+) site. Residue 124–127 (NPVD) coordinates substrate. Substrate is bound at residue 152–155 (DSSR). Residue H179 is the Proton acceptor of the active site. Y223 carries the phosphotyrosine modification. T232 is a binding site for substrate.

Belongs to the LDH/MDH superfamily. LDH family. Homotetramer.

The protein localises to the cytoplasm. It carries out the reaction (S)-lactate + NAD(+) = pyruvate + NADH + H(+). It functions in the pathway fermentation; pyruvate fermentation to lactate; (S)-lactate from pyruvate: step 1/1. With respect to regulation, the quaternary structure is constitutionally similar to the active conformation of allosteric LDHs, and the regulation is independent of the fructose 1,6-bisphosphate-binding site. Catalyzes the conversion of lactate to pyruvate. The protein is L-lactate dehydrogenase of Lactiplantibacillus pentosus (Lactobacillus pentosus).